Reading from the N-terminus, the 737-residue chain is Propionyl-CoA carboxylase alpha chain, mitochondrial (737 aa).

Residues 1–61 (MAGLWVRTVA…QCLVVSRSLS (61 aa)) constitute a mitochondrion transit peptide. The Biotin carboxylation domain maps to 71-518 (TFDKILIANR…STKFLSDVYP (448 aa)). K74 is modified (N6-acetyllysine; alternate). N6-succinyllysine; alternate is present on K74. K128 is modified (N6-succinyllysine). Position 159 is an N6-acetyllysine; alternate (K159). K159 carries the N6-succinyllysine; alternate modification. K163 carries the post-translational modification N6-acetyllysine. ATP is bound at residue K186. Positions 190 to 387 (KLLAKRAKVN…LVQEMILVAK (198 aa)) constitute an ATP-grasp domain. K197 carries the N6-succinyllysine modification. K209 carries the post-translational modification N6-acetyllysine; alternate. The residue at position 209 (K209) is an N6-succinyllysine; alternate. ATP-binding positions include 218 to 279 (AREI…PRHI), E270, and N305. A Phosphoserine modification is found at S261. An N6-succinyllysine modification is found at K271. K337 bears the N6-acetyllysine; alternate mark. An N6-succinyllysine; alternate modification is found at K337. The Mg(2+) site is built by E345, E358, and N360. Mn(2+) is bound by residues E345, E358, and N360. R362 is a catalytic residue. N6-succinyllysine occurs at positions 394 and 416. A biotin-binding site is contributed by F418. Position 505 is an N6-acetyllysine (K505). An N6-succinyllysine mark is found at K511, K522, K567, and K657. A Biotinyl-binding domain is found at 658-737 (FMLEKVPKDT…GEGDLLVELE (80 aa)). The residue at position 703 (K703) is an N6-biotinyllysine; by HLCS.

In terms of assembly, the holoenzyme is a dodecamer composed of 6 PCCA/alpha subunits and 6 PCCB/beta subunits. Interacts (via the biotin carboxylation domain) with SIRT4. Interacts with SIRT3 and SIRT5. Requires biotin as cofactor. The cofactor is Mg(2+). It depends on Mn(2+) as a cofactor. Acetylated. In terms of processing, the biotin cofactor is covalently attached to the C-terminal biotinyl-binding domain and is required for the catalytic activity. Biotinylation is catalyzed by HLCS.

The protein localises to the mitochondrion matrix. It carries out the reaction propanoyl-CoA + hydrogencarbonate + ATP = (S)-methylmalonyl-CoA + ADP + phosphate + H(+). The catalysed reaction is butanoyl-CoA + hydrogencarbonate + ATP = (2S)-ethylmalonyl-CoA + ADP + phosphate + H(+). It participates in metabolic intermediate metabolism; propanoyl-CoA degradation; succinyl-CoA from propanoyl-CoA: step 1/3. Its function is as follows. This is one of the 2 subunits of the biotin-dependent propionyl-CoA carboxylase (PCC), a mitochondrial enzyme involved in the catabolism of odd chain fatty acids, branched-chain amino acids isoleucine, threonine, methionine, and valine and other metabolites. Propionyl-CoA carboxylase catalyzes the carboxylation of propionyl-CoA/propanoyl-CoA to D-methylmalonyl-CoA/(S)-methylmalonyl-CoA. Within the holoenzyme, the alpha subunit catalyzes the ATP-dependent carboxylation of the biotin carried by the biotin carboxyl carrier (BCC) domain, while the beta subunit then transfers the carboxyl group from carboxylated biotin to propionyl-CoA. Propionyl-CoA carboxylase also significantly acts on butyryl-CoA/butanoyl-CoA, which is converted to ethylmalonyl-CoA/(2S)-ethylmalonyl-CoA. Other alternative minor substrates include (2E)-butenoyl-CoA/crotonoyl-CoA. The chain is Propionyl-CoA carboxylase alpha chain, mitochondrial from Rattus norvegicus (Rat).